A 40-amino-acid chain; its full sequence is Photosystem II reaction center protein J (40 aa).

A helical transmembrane segment spans residues 8 to 28 (IPLWIIGTVAGILVIGLVGIF).

Belongs to the PsbJ family. As to quaternary structure, PSII is composed of 1 copy each of membrane proteins PsbA, PsbB, PsbC, PsbD, PsbE, PsbF, PsbH, PsbI, PsbJ, PsbK, PsbL, PsbM, PsbT, PsbX, PsbY, PsbZ, Psb30/Ycf12, at least 3 peripheral proteins of the oxygen-evolving complex and a large number of cofactors. It forms dimeric complexes.

The protein resides in the plastid. It localises to the chloroplast thylakoid membrane. In terms of biological role, one of the components of the core complex of photosystem II (PSII). PSII is a light-driven water:plastoquinone oxidoreductase that uses light energy to abstract electrons from H(2)O, generating O(2) and a proton gradient subsequently used for ATP formation. It consists of a core antenna complex that captures photons, and an electron transfer chain that converts photonic excitation into a charge separation. The sequence is that of Photosystem II reaction center protein J from Spinacia oleracea (Spinach).